Here is a 178-residue protein sequence, read N- to C-terminus: MEKIKSTTILAVRRNGKTVIAGDGQVTLGSAVVKHTAKKIRVLNEGKVIVGFAGSAADGLALMERLEEKLNKYKGNLVKSAVELAKDWRLDKYLRRLEAVMIAADKNNMLLLSGNGDVIEPDEPVLAIGSGGDYARSAALALYRNTDLDARKIVEEAMKIAGEICIYTNQNFVIEEIE.

The active site involves T7. 3 residues coordinate Na(+): G162, C165, and T168.

The protein belongs to the peptidase T1B family. HslV subfamily. In terms of assembly, a double ring-shaped homohexamer of HslV is capped on each side by a ring-shaped HslU homohexamer. The assembly of the HslU/HslV complex is dependent on binding of ATP.

It localises to the cytoplasm. The catalysed reaction is ATP-dependent cleavage of peptide bonds with broad specificity.. Its activity is regulated as follows. Allosterically activated by HslU binding. Its function is as follows. Protease subunit of a proteasome-like degradation complex believed to be a general protein degrading machinery. The sequence is that of ATP-dependent protease subunit HslV from Sulfurihydrogenibium sp. (strain YO3AOP1).